Consider the following 78-residue polypeptide: uncharacterized protein (78 aa).

This is an uncharacterized protein from Saccharomyces cerevisiae (strain ATCC 204508 / S288c) (Baker's yeast).